Reading from the N-terminus, the 224-residue chain is Cytidylate kinase (224 aa).

Residue 13–21 participates in ATP binding; the sequence is GPSASGKGT.

This sequence belongs to the cytidylate kinase family. Type 1 subfamily.

The protein resides in the cytoplasm. The enzyme catalyses CMP + ATP = CDP + ADP. It catalyses the reaction dCMP + ATP = dCDP + ADP. The sequence is that of Cytidylate kinase from Nitrosomonas eutropha (strain DSM 101675 / C91 / Nm57).